A 346-amino-acid polypeptide reads, in one-letter code: Uroporphyrinogen decarboxylase (346 aa).

Residues 21-25 (RQAGR), Phe40, Asp71, Tyr146, Ser201, and His316 each bind substrate.

The protein belongs to the uroporphyrinogen decarboxylase family. As to quaternary structure, homodimer.

The protein localises to the cytoplasm. The catalysed reaction is uroporphyrinogen III + 4 H(+) = coproporphyrinogen III + 4 CO2. It functions in the pathway porphyrin-containing compound metabolism; protoporphyrin-IX biosynthesis; coproporphyrinogen-III from 5-aminolevulinate: step 4/4. Catalyzes the decarboxylation of four acetate groups of uroporphyrinogen-III to yield coproporphyrinogen-III. This chain is Uroporphyrinogen decarboxylase, found in Rickettsia felis (strain ATCC VR-1525 / URRWXCal2) (Rickettsia azadi).